Consider the following 1465-residue polypeptide: Neuropathy target esterase sws (1465 aa).

Residues 1–34 lie on the Lumenal side of the membrane; the sequence is MDVLEMLRASASGSYNTIFSEAWCQYVSKQITAT. A helical membrane pass occupies residues 35-55; the sequence is MYMYCALGMMGVLFLAWFMYF. The Cytoplasmic segment spans residues 56-1465; that stretch reads KRMARLRLRD…RSSANNETKN (1410 aa). Position 174-301 (174-301) interacts with a nucleoside 3',5'-cyclic phosphate; that stretch reads IFGHFEKPVF…IRVIQVIMIR (128 aa). Polar residues-rich tracts occupy residues 331 to 349 and 434 to 454; these read STMS…RQTP and QQSV…TPDG. Disordered stretches follow at residues 331-421 and 434-460; these read STMS…TEVH and QQSV…SCPP. 2 positions are modified to phosphoserine: Ser-446 and Ser-455. A nucleoside 3',5'-cyclic phosphate is bound by residues 484–611 and 600–727; these read ELGL…VVRR and IVLD…LSHR. The PNPLA domain maps to 954-1120; sequence LVLGGGGARG…VNNLPGHLWR (167 aa). The short motif at 958 to 963 is the GXGXXG element; sequence GGGARG. Positions 985–989 match the GXSXG motif; it reads GVSIG. Residue Ser-987 is the Nucleophile of the active site. Catalysis depends on Asp-1107, which acts as the Proton acceptor. The DGA/G signature appears at 1107–1109; sequence DGG. At Ser-1201 the chain carries Phosphoserine. A disordered region spans residues 1371–1465; it reads LERKTDKSTQ…RSSANNETKN (95 aa). Positions 1378-1390 are enriched in low complexity; the sequence is STQSSPPTSSRTS. Positions 1392-1402 are enriched in basic and acidic residues; it reads RGKEEARHMDN. Polar residues predominate over residues 1413 to 1424; that stretch reads TGSGATEGIHTS. The segment covering 1447–1456 has biased composition (basic and acidic residues); the sequence is VYKDEDKENR.

It belongs to the NTE family. Interacts with Pka-C3; interaction inhibits the catalytic function of Pka-C3 and the esterase activity of sws.

Its subcellular location is the endoplasmic reticulum membrane. It carries out the reaction a 1-acyl-sn-glycero-3-phosphocholine + H2O = sn-glycerol 3-phosphocholine + a fatty acid + H(+). Phospholipase B that deacylates intracellular phosphatidylcholine (PtdCho), generating glycerophosphocholine (GroPtdCho). This deacylation occurs at both sn-2 and sn-1 positions of PtdCho. Its specific chemical modification by certain organophosphorus (OP) compounds leads to distal axonopathy. Plays a role in the signaling mechanism between neurons and glia that regulates glia wrapping during development of the adult brain. Essential for membrane lipid homeostasis and cell survival in both neurons and glia of the adult brain. This Drosophila erecta (Fruit fly) protein is Neuropathy target esterase sws.